The chain runs to 232 residues: LOB domain-containing protein 11 (232 aa).

The interval 1–50 (MLKMEINGGVATPTASAVAKVTETTTPVNSPSPTSSPPPPPSPQQPPQPP) is disordered. The segment covering 34–50 (TSSPPPPPSPQQPPQPP) has biased composition (pro residues). In terms of domain architecture, LOB spans 54–155 (SPCAACKILR…AQLAKTQVEL (102 aa)). The segment at 181–218 (EQGQQKMSFESSFESGDEFISSPDEESNDLGFLEDNNN) is disordered. Residues 188 to 202 (SFESSFESGDEFISS) are compositionally biased toward low complexity.

Belongs to the LOB domain-containing protein family. Expressed in young shoots, stems, leaves and flowers.

This is LOB domain-containing protein 11 (LBD11) from Arabidopsis thaliana (Mouse-ear cress).